The chain runs to 465 residues: Cerebellar degeneration-related protein 2-like (465 aa).

Coiled coils occupy residues 31–64 (AAEL…HEIE), 91–142 (ARDL…LEQL), and 188–266 (LEQE…YLLA). The segment at 282–315 (APEADDPQPGSGDDSNAQDGVSSPAASPSHAVRK) is disordered. S308, S318, and S344 each carry phosphoserine. A coiled-coil region spans residues 350-377 (MSILREVDEQYHALLEKYEELLSKCRQH). The disordered stretch occupies residues 382–421 (RHAGVQTSRPISRDSSWRDLLGGEESPGEGKAGEKSLSQH). S407 carries the post-translational modification Phosphoserine.

The protein belongs to the CDR2 family.

The protein is Cerebellar degeneration-related protein 2-like (Cdr2l) of Mus musculus (Mouse).